The chain runs to 58 residues: Small ribosomal subunit protein bS21 (58 aa).

Positions 34–58 are disordered; sequence KREHYEKPSVKRKKKSEAARKRKFK. Residues 43–58 show a composition bias toward basic residues; the sequence is VKRKKKSEAARKRKFK.

The protein belongs to the bacterial ribosomal protein bS21 family.

This chain is Small ribosomal subunit protein bS21, found in Clostridium acetobutylicum (strain ATCC 824 / DSM 792 / JCM 1419 / IAM 19013 / LMG 5710 / NBRC 13948 / NRRL B-527 / VKM B-1787 / 2291 / W).